The sequence spans 248 residues: MTRYKAIISYDGSGFYGYQIQPNARTVQAEIEKALKKMHKGKNVRITASGRTDTGVHAKGQVIHFDSDLDITADKFQKALQVMTPFDISFLTVDEAPADFHARFGTVGKEYRYIVKRTKIFDPFSRNFALHYPYELDIAKMKLASECLIGEHDFTSFCSARTERDSKVRTLYSIDFYEEDEETLVIAFQGNGFLYNMVRILTGTLLDAGQGRISSEDITEALLARDRQKLISKTAPPQGLYLWRVDYE.

Residue aspartate 53 is the Nucleophile of the active site. Position 111 (tyrosine 111) interacts with substrate.

Belongs to the tRNA pseudouridine synthase TruA family. Homodimer.

It catalyses the reaction uridine(38/39/40) in tRNA = pseudouridine(38/39/40) in tRNA. Formation of pseudouridine at positions 38, 39 and 40 in the anticodon stem and loop of transfer RNAs. In Listeria welshimeri serovar 6b (strain ATCC 35897 / DSM 20650 / CCUG 15529 / CIP 8149 / NCTC 11857 / SLCC 5334 / V8), this protein is tRNA pseudouridine synthase A.